The following is a 532-amino-acid chain: E3 ubiquitin-protein ligase MGRN1 (532 aa).

A lipid anchor (N-myristoyl glycine) is attached at G2. The segment at 277–316 (ECVVCLSDLRDTLILPCRHLCLCTSCADTLRYQANNCPIC) adopts an RING-type zinc-finger fold. The Required for TSG101-binding signature appears at 384–387 (PSAP). The residue at position 389 (Y389) is a Phosphotyrosine. The tract at residues 419-518 (LQKGKTQSKS…QPVPPADIYL (100 aa)) is disordered. Positions 422-435 (GKTQSKSPDSTLRS) are enriched in polar residues. Phosphoserine occurs at positions 428, 449, 452, and 501. Residues 442–453 (EEDEEKLSEDSD) are compositionally biased toward acidic residues.

In terms of assembly, interacts with MC1R and MC4R. Interacts with TSG101. Interacts with mislocalized cytosolically exposed PRNP; this interaction alters MGRN1 subcellular location and causes lysosomal enlargement. Post-translationally, autoubiquitinated in vitro. Widely expressed, with highest levels in brain, heart, kidney and liver. In the CNS, especially prominent in the Purkinje cells of the cerebellum. In the skin, expressed in the basal layer of the epidermis and hair follicles, primarily in the outer root sheath. Isoforms 1, 3, 4 and 5 are equally expressed in the liver. Isoforms 1, 3 and 4 are most abundant in brain, kidney and heart, respectively.

It localises to the early endosome. The protein resides in the cytoplasm. Its subcellular location is the cell membrane. The protein localises to the nucleus. It carries out the reaction S-ubiquitinyl-[E2 ubiquitin-conjugating enzyme]-L-cysteine + [acceptor protein]-L-lysine = [E2 ubiquitin-conjugating enzyme]-L-cysteine + N(6)-ubiquitinyl-[acceptor protein]-L-lysine.. It participates in protein modification; protein ubiquitination. Its function is as follows. E3 ubiquitin-protein ligase. Mediates TSG101 monoubiquitination at multiple sites. Plays a role in the regulation of endosome-to-lysosome trafficking. Impairs MC1R- and MC4R-signaling by competing with GNAS-binding to MCRs and inhibiting agonist-induced cAMP production. Does not inhibit ADRB2-signaling. Does not promote MC1R ubiquitination. Also acts as a negative regulator of hedgehog signaling. This is E3 ubiquitin-protein ligase MGRN1 (Mgrn1) from Mus musculus (Mouse).